The sequence spans 827 residues: Spastin (827 aa).

The span at 1-13 shows a compositional bias: polar residues; the sequence is MVRNKYTLTTAGK. The interval 1 to 58 is disordered; that stretch reads MVRNKYTLTTAGKSPSKKSRTGSLSKQHDATGDDDGETGTLDGSGSAAGSPVGGGTDA. Residues 1–79 are Cytoplasmic-facing; sequence MVRNKYTLTT…KQNLYIISFP (79 aa). The span at 38 to 50 shows a compositional bias: low complexity; it reads TGTLDGSGSAAGS. Residues 80–100 constitute an intramembrane region (helical); the sequence is VIFVFNVLRSLLYQLFIVFRY. The Cytoplasmic portion of the chain corresponds to 101–827; sequence VYNFTTKVVY…WLQDFGDVTL (727 aa). 2 disordered regions span residues 127 to 190 and 207 to 229; these read QHGH…AHPL and SIQR…KQKH. Over residues 129–141 the composition is skewed to basic residues; the sequence is GHHHHHHHRHSSH. Low complexity predominate over residues 142–190; the sequence is SIHSTAAAHQLQQHQQQQQHQYSLLQQEQHGVTEPQQQQQQQHQAAHPL. The MIT domain occupies 231–306; that stretch reads HRRAFEYISK…SMARDRLQFL (76 aa). 3 disordered regions span residues 358-381, 398-433, and 476-526; these read HHPA…ATPS, VGYK…GGAG, and VSIP…PQIS. The span at 364-381 shows a compositional bias: low complexity; sequence TAASSRPTTAATAPATPS. Low complexity-rich tracts occupy residues 476–486 and 510–524; these read VSIPIPGSSPV and QQPQ…QQPQ. Residue 592–599 participates in ATP binding; that stretch reads GPPGNGKT.

This sequence belongs to the AAA ATPase family. Spastin subfamily. As to quaternary structure, homohexamer. The homohexamer is stabilized by ATP-binding. The homohexamer may adopt a ring conformation through which microtubules pass prior to being severed. Interacts with microtubules.

The protein localises to the membrane. It localises to the cytoplasm. The protein resides in the cytoskeleton. Its subcellular location is the microtubule organizing center. It is found in the centrosome. It catalyses the reaction n ATP + n H2O + a microtubule = n ADP + n phosphate + (n+1) alpha/beta tubulin heterodimers.. In terms of biological role, ATP-dependent microtubule severing protein. Microtubule severing may promote reorganization of cellular microtubule arrays and the release of microtubules from the microtubule organizing center following nucleation. This Anopheles gambiae (African malaria mosquito) protein is Spastin (spas).